We begin with the raw amino-acid sequence, 506 residues long: Protein MGF 505-9R (506 aa).

3 ANK repeats span residues 54-83 (SIHK…NLKY), 253-283 (QVDT…EIVE), and 313-343 (FVKK…KINL).

Belongs to the asfivirus MGF 505 family.

Plays a role in virus cell tropism, and may be required for efficient virus replication in macrophages. The polypeptide is Protein MGF 505-9R (African swine fever virus (isolate Tick/Malawi/Lil 20-1/1983) (ASFV)).